The primary structure comprises 321 residues: MVGRMERQSASSSASCSPSSSAAGTSSSSSACGGKKRPDILNMIRSATCLNSSSTDTGKGRSKQSSNKVTHGFHLVEGKSGHDMEDYHVAEYKYDKSHELGLFAIFDGHLGDSVPSYLKANLFCNILKEPIFWTNPQEAIKNAYRSTNKYILENAKQLGPGGSTAVTAIVVDGKDMWVANVGDSRAVVCERGAANQLTVDHEPHTTNERQRIEKQGGFVTTFPGDVPRVNGQLAVARAFGDQSLKAHLSSEPDVRHVPINSSIEFVILASDGLWKVMKNQEAVDLVKSIKDPQAAAKRLTTEALARKSKDDISCIVIRFRC.

Disordered regions lie at residues 1-36 (MVGRMERQSASSSASCSPSSSAAGTSSSSSACGGKK) and 51-70 (NSSSTDTGKGRSKQSSNKVT). The segment covering 9 to 31 (SASSSASCSPSSSAAGTSSSSSA) has biased composition (low complexity). The segment covering 51–69 (NSSSTDTGKGRSKQSSNKV) has biased composition (polar residues). The region spanning 70-319 (THGFHLVEGK…DDISCIVIRF (250 aa)) is the PPM-type phosphatase domain. 4 residues coordinate Mn(2+): aspartate 107, glycine 108, aspartate 271, and aspartate 310.

The protein belongs to the PP2C family. It depends on Mg(2+) as a cofactor. The cofactor is Mn(2+).

The enzyme catalyses O-phospho-L-seryl-[protein] + H2O = L-seryl-[protein] + phosphate. It catalyses the reaction O-phospho-L-threonyl-[protein] + H2O = L-threonyl-[protein] + phosphate. This is Probable protein phosphatase 2C 44 from Oryza sativa subsp. japonica (Rice).